Consider the following 625-residue polypeptide: Acetolactate synthase (625 aa).

Residues 1–29 (MSAPTKPHARPQGAGNSVPNTVKPATQFP) form a disordered region. Residues 14–29 (AGNSVPNTVKPATQFP) show a composition bias toward polar residues. Residue E92 participates in thiamine diphosphate binding. Residues R194, 300-321 (HGTV…LGTR), and 343-362 (DIDP…IVGD) contribute to the FAD site. Residues 436-516 (QHQMWAAQFI…IKVALINNGN (81 aa)) form a thiamine pyrophosphate binding region. Residues D487 and N514 each coordinate Mg(2+).

Belongs to the TPP enzyme family. Requires Mg(2+) as cofactor. The cofactor is thiamine diphosphate.

It carries out the reaction 2 pyruvate + H(+) = (2S)-2-acetolactate + CO2. It functions in the pathway amino-acid biosynthesis; L-isoleucine biosynthesis; L-isoleucine from 2-oxobutanoate: step 1/4. It participates in amino-acid biosynthesis; L-valine biosynthesis; L-valine from pyruvate: step 1/4. In Mycobacterium leprae (strain TN), this protein is Acetolactate synthase (ilvB).